The sequence spans 403 residues: Synaptotagmin-7 (403 aa).

Residues 1-16 (MYRDPEAASPGAPSRD) are Vesicular-facing. Residues 17–37 (VLLVSAIITVSLSVTVVLCGL) form a helical membrane-spanning segment. The Cytoplasmic portion of the chain corresponds to 38 to 403 (CHWCQRKLGK…PVAQWHQLKA (366 aa)). Ser52 carries the post-translational modification Phosphoserine. The tract at residues 53–106 (LETVGTPDSGRGRSEKKAIKLPAGGKAVNTAPVPGQTPHDESDRRTEPRSSVSD) is disordered. Thr58 is modified (phosphothreonine). Position 61 is a phosphoserine (Ser61). Over residues 90-100 (PHDESDRRTEP) the composition is skewed to basic and acidic residues. 2 positions are modified to phosphoserine: Ser119 and Ser122. C2 domains lie at 135–255 (NLGR…TFWK) and 266–399 (SRGE…AQWH). The Ca(2+) site is built by Asp166, Asp172, Asp225, Asp227, Ser230, Asp233, Asp297, Asp303, Asp357, Asp359, Ser362, and Asp365.

Belongs to the synaptotagmin family. In terms of assembly, homodimer. Can also form heterodimers with SYT6, SYT9 and SYT10. Interacts with calmodulin (CALM1, CALM2 or CALM3). Interacts with CD63; required for localization to lysosomes. Interacts with APP. Requires Ca(2+) as cofactor. Palmitoylated at its vesicular N-terminus; palmitoylation is required for localization to lysosome and phagocytosis in macrophages. As to expression, expressed in a variety of adult and fetal tissues.

It localises to the cell membrane. The protein resides in the presynaptic cell membrane. It is found in the cytoplasmic vesicle. The protein localises to the secretory vesicle. Its subcellular location is the synaptic vesicle membrane. It localises to the lysosome membrane. The protein resides in the phagosome membrane. It is found in the peroxisome membrane. The protein localises to the secretory vesicle membrane. Functionally, ca(2+) sensor involved in Ca(2+)-dependent exocytosis of secretory and synaptic vesicles through Ca(2+) and phospholipid binding to the C2 domain. Ca(2+) induces binding of the C2-domains to phospholipid membranes and to assembled SNARE-complexes; both actions contribute to triggering exocytosis. SYT7 binds Ca(2+) with high affinity and slow kinetics compared to other synaptotagmins. Involved in Ca(2+)-triggered lysosomal exocytosis, a major component of the plasma membrane repair. Ca(2+)-regulated delivery of lysosomal membranes to the cell surface is also involved in the phagocytic uptake of particles by macrophages. Ca(2+)-triggered lysosomal exocytosis also plays a role in bone remodeling by regulating secretory pathways in osteoclasts and osteoblasts. In case of infection, involved in participates cell invasion by Trypanosoma cruzi via Ca(2+)-triggered lysosomal exocytosis. Involved in cholesterol transport from lysosome to peroxisome by promoting membrane contacts between lysosomes and peroxisomes: probably acts by promoting vesicle fusion by binding phosphatidylinositol-4,5-bisphosphate on peroxisomal membranes. Acts as a key mediator of synaptic facilitation, a process also named short-term synaptic potentiation: synaptic facilitation takes place at synapses with a low initial release probability and is caused by influx of Ca(2+) into the axon terminal after spike generation, increasing the release probability of neurotransmitters. Probably mediates synaptic facilitation by directly increasing the probability of release. May also contribute to synaptic facilitation by regulating synaptic vesicle replenishment, a process required to ensure that synaptic vesicles are ready for the arrival of the next action potential: SYT7 is required for synaptic vesicle replenishment by acting as a sensor for Ca(2+) and by forming a complex with calmodulin. Also acts as a regulator of Ca(2+)-dependent insulin and glucagon secretion in beta-cells. Triggers exocytosis by promoting fusion pore opening and fusion pore expansion in chromaffin cells. Also regulates the secretion of some non-synaptic secretory granules of specialized cells. This is Synaptotagmin-7 from Homo sapiens (Human).